Here is a 187-residue protein sequence, read N- to C-terminus: UPF0301 protein YqgE (187 aa).

Belongs to the UPF0301 (AlgH) family.

The chain is UPF0301 protein YqgE from Salmonella agona (strain SL483).